The chain runs to 485 residues: Glutamyl-tRNA(Gln) amidotransferase subunit A (485 aa).

Residues lysine 82 and serine 157 each act as charge relay system in the active site. Residue serine 181 is the Acyl-ester intermediate of the active site.

This sequence belongs to the amidase family. GatA subfamily. In terms of assembly, heterotrimer of A, B and C subunits.

The enzyme catalyses L-glutamyl-tRNA(Gln) + L-glutamine + ATP + H2O = L-glutaminyl-tRNA(Gln) + L-glutamate + ADP + phosphate + H(+). Its function is as follows. Allows the formation of correctly charged Gln-tRNA(Gln) through the transamidation of misacylated Glu-tRNA(Gln) in organisms which lack glutaminyl-tRNA synthetase. The reaction takes place in the presence of glutamine and ATP through an activated gamma-phospho-Glu-tRNA(Gln). This is Glutamyl-tRNA(Gln) amidotransferase subunit A from Treponema denticola (strain ATCC 35405 / DSM 14222 / CIP 103919 / JCM 8153 / KCTC 15104).